The following is a 382-amino-acid chain: Gap junction alpha-1 protein (382 aa).

The Cytoplasmic segment spans residues 2-23 (GDWSALGKLLDKVQAYSTAGGK). A Phosphoserine modification is found at Ser5. The helical transmembrane segment at 24–44 (VWLSVLFIFRILLLGTAVESA) threads the bilayer. Residues 45 to 76 (WGDEQSAFRCNTQQPGCENVCYDKSFPISHVR) are Extracellular-facing. 2 cysteine pairs are disulfide-bonded: Cys54/Cys192 and Cys187/Cys198. Residues 77-97 (FWVLQIIFVSVPTLLYLAHVF) form a helical membrane-spanning segment. Topologically, residues 98–155 (YVMRKEEKLNKKEEELKVAQTDGVNVEMHLKQIEIKKFKYGIEEHGKVKMRGGLLRTY) are cytoplasmic. Residue Lys144 forms a Glycyl lysine isopeptide (Lys-Gly) (interchain with G-Cter in SUMO) linkage. Residues 156–176 (IISILFKSVFEVAFLLIQWYI) traverse the membrane as a helical segment. At 177-207 (YGFSLSAVYTCKRDPCPHQVDCFLSRPTEKT) the chain is on the extracellular side. A helical membrane pass occupies residues 208–228 (IFIIFMLVVSLVSLALNIIEL). Residues 229-382 (FYAFFKGVKD…SRPRPDDLEI (154 aa)) lie on the Cytoplasmic side of the membrane. Residue Lys237 forms a Glycyl lysine isopeptide (Lys-Gly) (interchain with G-Cter in SUMO) linkage. An interaction with NOV region spans residues 244–382 (SDPYHATTGP…SRPRPDDLEI (139 aa)). The residue at position 247 (Tyr247) is a Phosphotyrosine. Residues Ser255, Ser257, and Ser262 each carry the phosphoserine modification. Residues 264 to 382 (KYAYFNGCSS…SRPRPDDLEI (119 aa)) are interaction with UBQLN4. Cys271 bears the S-nitrosocysteine mark. Residue Thr275 is modified to Phosphothreonine. A phosphoserine mark is found at Ser306 and Ser314. Polar residues predominate over residues 317-332 (QNRMGQAGSTISNSHA). The disordered stretch occupies residues 317–382 (QNRMGQAGST…SRPRPDDLEI (66 aa)). Residue Ser325 is modified to Phosphoserine; by CK1. Thr326 is modified (phosphothreonine). Phosphoserine; by CK1 is present on residues Ser328 and Ser330. Basic and acidic residues predominate over residues 342 to 351 (QNSKKLDAGH). Residues Ser344 and Ser365 each carry the phosphoserine modification. Low complexity predominate over residues 362-374 (RPSSRASSRASSR). A Phosphoserine; by PKC/PRKCG and PKC/PRKCD modification is found at Ser368. Phosphoserine is present on residues Ser369 and Ser373.

This sequence belongs to the connexin family. Alpha-type (group II) subfamily. A connexon is composed of a hexamer of connexins. Interacts with SGSM3. Interacts with RIC1/CIP150. Interacts with CNST and CSNK1D. Interacts (via C-terminus) with TJP1. Interacts (via C-terminus) with SRC (via SH3 domain). Interacts (not ubiquitinated) with UBQLN4 (via UBA domain). Interacts with NOV. Interacts with TMEM65. Interacts with ANK3/ANKG and PKP2. Phosphorylation at Ser-325, Ser-328 and Ser-330 by CK1 modulates gap junction assembly. Phosphorylated at Ser-368 by PRKCG; phosphorylation induces disassembly of gap junction plaques and inhibition of gap junction activity. Phosphorylation at Ser-368 by PRKCD triggers its internalization into small vesicles leading to proteasome-mediated degradation. Post-translationally, sumoylated with SUMO1, SUMO2 and SUMO3, which may regulate the level of functional Cx43 gap junctions at the plasma membrane. May be desumoylated by SENP1 or SENP2. In terms of processing, S-nitrosylation at Cys-271 is enriched at the muscle endothelial gap junction in arteries, it augments channel permeability and may regulate of smooth muscle cell to endothelial cell communication. Acetylated in the developing cortex; leading to delocalization from the cell membrane.

It is found in the cell membrane. It localises to the cell junction. Its subcellular location is the gap junction. The protein localises to the endoplasmic reticulum. Gap junction protein that acts as a regulator of bladder capacity. A gap junction consists of a cluster of closely packed pairs of transmembrane channels, the connexons, through which materials of low MW diffuse from one cell to a neighboring cell. May play a critical role in the physiology of hearing by participating in the recycling of potassium to the cochlear endolymph. Negative regulator of bladder functional capacity: acts by enhancing intercellular electrical and chemical transmission, thus sensitizing bladder muscles to cholinergic neural stimuli and causing them to contract. May play a role in cell growth inhibition through the regulation of NOV expression and localization. Plays an essential role in gap junction communication in the ventricles. This is Gap junction alpha-1 protein (GJA1) from Sus scrofa (Pig).